We begin with the raw amino-acid sequence, 566 residues long: Type 2 DNA topoisomerase 6 subunit B (566 aa).

ATP is bound by residues asparagine 48, aspartate 80, 101 to 102, 111 to 118, and lysine 475; these read TK and GQQGIGIS.

It belongs to the TOP6B family. As to quaternary structure, homodimer. Heterotetramer of two Top6A and two Top6B chains.

It carries out the reaction ATP-dependent breakage, passage and rejoining of double-stranded DNA.. Relaxes both positive and negative superturns and exhibits a strong decatenase activity. This chain is Type 2 DNA topoisomerase 6 subunit B, found in Thermococcus sibiricus (strain DSM 12597 / MM 739).